Here is a 400-residue protein sequence, read N- to C-terminus: Telomere repeat-binding protein 6 (400 aa).

Positions 173-252 (VKFGIKSLNI…DDENLGSLGF (80 aa)) constitute a Ubiquitin-like domain. An HTH myb-type domain is found at 310 to 369 (VQRRIRRPFTVSEVEALVQAVERLGTGRWRDVKSHAFNHVNHRTYVDLKDKWKTLVHTAK). Residues 338-365 (WRDVKSHAFNHVNHRTYVDLKDKWKTLV) constitute a DNA-binding region (H-T-H motif).

Homodimer. As to expression, expressed ubiquitously.

It localises to the nucleus. Binds specifically to the plant telomeric double-stranded DNA sequences. At least 4 repeats of telomeric sequences are required for binding. This Arabidopsis thaliana (Mouse-ear cress) protein is Telomere repeat-binding protein 6 (TRP6).